The chain runs to 248 residues: Phosphoadenosine 5'-phosphosulfate reductase (248 aa).

The active-site Nucleophile; cysteine thiosulfonate intermediate is Cys239.

The protein belongs to the PAPS reductase family. CysH subfamily.

The protein resides in the cytoplasm. The catalysed reaction is [thioredoxin]-disulfide + sulfite + adenosine 3',5'-bisphosphate + 2 H(+) = [thioredoxin]-dithiol + 3'-phosphoadenylyl sulfate. It participates in sulfur metabolism; hydrogen sulfide biosynthesis; sulfite from sulfate: step 3/3. Catalyzes the formation of sulfite from phosphoadenosine 5'-phosphosulfate (PAPS) using thioredoxin as an electron donor. The protein is Phosphoadenosine 5'-phosphosulfate reductase of Alteromonas mediterranea (strain DSM 17117 / CIP 110805 / LMG 28347 / Deep ecotype).